The following is a 236-amino-acid chain: tRNA1(Val) (adenine(37)-N6)-methyltransferase (236 aa).

The protein belongs to the methyltransferase superfamily. tRNA (adenine-N(6)-)-methyltransferase family.

It is found in the cytoplasm. The catalysed reaction is adenosine(37) in tRNA1(Val) + S-adenosyl-L-methionine = N(6)-methyladenosine(37) in tRNA1(Val) + S-adenosyl-L-homocysteine + H(+). Functionally, specifically methylates the adenine in position 37 of tRNA(1)(Val) (anticodon cmo5UAC). This chain is tRNA1(Val) (adenine(37)-N6)-methyltransferase, found in Actinobacillus pleuropneumoniae serotype 7 (strain AP76).